Reading from the N-terminus, the 190-residue chain is Probable nicotinate-nucleotide adenylyltransferase (190 aa).

Belongs to the NadD family.

It catalyses the reaction nicotinate beta-D-ribonucleotide + ATP + H(+) = deamido-NAD(+) + diphosphate. It functions in the pathway cofactor biosynthesis; NAD(+) biosynthesis; deamido-NAD(+) from nicotinate D-ribonucleotide: step 1/1. Catalyzes the reversible adenylation of nicotinate mononucleotide (NaMN) to nicotinic acid adenine dinucleotide (NaAD). This is Probable nicotinate-nucleotide adenylyltransferase from Myxococcus xanthus (strain DK1622).